The sequence spans 249 residues: Probable transcriptional regulatory protein Rru_A1086 (249 aa).

Belongs to the TACO1 family.

Its subcellular location is the cytoplasm. In Rhodospirillum rubrum (strain ATCC 11170 / ATH 1.1.1 / DSM 467 / LMG 4362 / NCIMB 8255 / S1), this protein is Probable transcriptional regulatory protein Rru_A1086.